We begin with the raw amino-acid sequence, 220 residues long: Guanylate kinase (220 aa).

In terms of domain architecture, Guanylate kinase-like spans 15–194 (GLMLVISSPS…AFDAVQSIVK (180 aa)). Residue 22-29 (SPSGAGKS) coordinates ATP.

The protein belongs to the guanylate kinase family.

It is found in the cytoplasm. It carries out the reaction GMP + ATP = GDP + ADP. In terms of biological role, essential for recycling GMP and indirectly, cGMP. This chain is Guanylate kinase, found in Rhizobium etli (strain ATCC 51251 / DSM 11541 / JCM 21823 / NBRC 15573 / CFN 42).